The following is a 145-amino-acid chain: uncharacterized protein (145 aa).

It belongs to the asfivirus K145R family.

The protein localises to the virion. This is an uncharacterized protein from African swine fever virus (isolate Pig/Kenya/KEN-50/1950) (ASFV).